The chain runs to 275 residues: Probable ribosomal RNA small subunit methyltransferase A (275 aa).

S-adenosyl-L-methionine is bound by residues Leu13, Gly38, Glu59, Asp84, and Asn101.

The protein belongs to the class I-like SAM-binding methyltransferase superfamily. rRNA adenine N(6)-methyltransferase family. RsmA subfamily.

The protein resides in the cytoplasm. Specifically dimethylates two adjacent adenosines in the loop of a conserved hairpin near the 3'-end of 16S rRNA in the 30S particle. May play a critical role in biogenesis of 30S subunits. This Methanocaldococcus jannaschii (strain ATCC 43067 / DSM 2661 / JAL-1 / JCM 10045 / NBRC 100440) (Methanococcus jannaschii) protein is Probable ribosomal RNA small subunit methyltransferase A.